We begin with the raw amino-acid sequence, 178 residues long: Ribosome maturation factor RimM (178 aa).

A PRC barrel domain is found at threonine 100–phenylalanine 178.

The protein belongs to the RimM family. As to quaternary structure, binds ribosomal protein uS19.

The protein resides in the cytoplasm. Its function is as follows. An accessory protein needed during the final step in the assembly of 30S ribosomal subunit, possibly for assembly of the head region. Essential for efficient processing of 16S rRNA. May be needed both before and after RbfA during the maturation of 16S rRNA. It has affinity for free ribosomal 30S subunits but not for 70S ribosomes. The chain is Ribosome maturation factor RimM from Pseudomonas fluorescens (strain SBW25).